The sequence spans 289 residues: Esterase GA18864 (289 aa).

Low complexity predominate over residues 1 to 19 (MTNNDAAVEAPSSSRASSS). The tract at residues 1–24 (MTNNDAAVEAPSSSRASSSKQQPK) is disordered. Catalysis depends on charge relay system residues Ser133, Asp191, and His218. A disordered region spans residues 253–289 (VSFIESGAEDNDDDGDANDAEVAAATAAAGSDLDDSD). The span at 259–271 (GAEDNDDDGDAND) shows a compositional bias: acidic residues. Residues 272–283 (AEVAAATAAAGS) show a composition bias toward low complexity.

This sequence belongs to the LovG family.

The sequence is that of Esterase GA18864 from Drosophila pseudoobscura pseudoobscura (Fruit fly).